The following is a 107-amino-acid chain: Class I hydrophobin hgfI (107 aa).

Residues 1–24 (MFSKLAIFATAAFAVLAAATPVRR) form the signal peptide. Cystine bridges form between C27–C88, C34–C82, C35–C68, and C89–C102.

The protein belongs to the fungal hydrophobin family. In terms of assembly, self-assembles to form functional amyloid fibrils called rodlets with a length range 100-150 nm. Self-assembly into fibrillar rodlets occurs spontaneously at hydrophobic:hydrophilic interfaces and the rodlets further associate laterally to form amphipathic monolayers. Only weekly expressed in hyphae cultured in liquid medium.

It is found in the secreted. Its subcellular location is the cell wall. Functionally, aerial growth, conidiation, and dispersal of filamentous fungi in the environment rely upon a capability of their secreting small amphipathic proteins called hydrophobins (HPBs) with low sequence identity. Class I can self-assemble into an outermost layer of rodlet bundles on aerial cell surfaces, conferring cellular hydrophobicity that supports fungal growth, development and dispersal; whereas Class II form highly ordered films at water-air interfaces through intermolecular interactions but contribute nothing to the rodlet structure. HgfI is a class I hydrophobin that is involved in cell surface hydrophobicity and lowers the surface tension of water and change the nature of the surfaces to which it adsorbs. The protein is Class I hydrophobin hgfI of Grifola frondosa (Maitake).